Consider the following 506-residue polypeptide: Chromosomal replication initiator protein DnaA (506 aa).

The segment at M1–R87 is domain I, interacts with DnaA modulators. A domain II region spans residues R87–S169. Positions D135–A154 are disordered. A compositionally biased stretch (low complexity) spans A139–P148. The tract at residues Y170 to S386 is domain III, AAA+ region. G214, G216, K217, and T218 together coordinate ATP. Positions H387–T506 are domain IV, binds dsDNA.

The protein belongs to the DnaA family. Oligomerizes as a right-handed, spiral filament on DNA at oriC.

The protein localises to the cytoplasm. Its function is as follows. Plays an essential role in the initiation and regulation of chromosomal replication. ATP-DnaA binds to the origin of replication (oriC) to initiate formation of the DNA replication initiation complex once per cell cycle. Binds the DnaA box (a 9 base pair repeat at the origin) and separates the double-stranded (ds)DNA. Forms a right-handed helical filament on oriC DNA; dsDNA binds to the exterior of the filament while single-stranded (ss)DNA is stabiized in the filament's interior. The ATP-DnaA-oriC complex binds and stabilizes one strand of the AT-rich DNA unwinding element (DUE), permitting loading of DNA polymerase. After initiation quickly degrades to an ADP-DnaA complex that is not apt for DNA replication. Binds acidic phospholipids. In terms of biological role, non-cooperatively binds DnaA boxes in the minimal plasmid RK2 replication origin (oriV). In vitro in the presence of plasmid RK2-derived TrfA and E.coli protein HU, forms an open complex at oriV. This complex was not however competent for formation of a pre-priming complex with E.coli DnaB and DnaC. Broad host range plasmid RK2 requires not only DnaA for replication but also TrfA and host factors. This Pseudomonas putida (strain ATCC 47054 / DSM 6125 / CFBP 8728 / NCIMB 11950 / KT2440) protein is Chromosomal replication initiator protein DnaA.